Consider the following 318-residue polypeptide: Probable pyridoxal 5'-phosphate synthase subunit PDX1.1 (318 aa).

A D-ribose 5-phosphate-binding site is contributed by Asp-49. Lys-106 serves as the catalytic Schiff-base intermediate with D-ribose 5-phosphate. Gly-178 contributes to the D-ribose 5-phosphate binding site. Arg-190 contributes to the D-glyceraldehyde 3-phosphate binding site. Residues Gly-239 and 260–261 (GS) contribute to the D-ribose 5-phosphate site.

It belongs to the PdxS/SNZ family.

The catalysed reaction is aldehydo-D-ribose 5-phosphate + D-glyceraldehyde 3-phosphate + L-glutamine = pyridoxal 5'-phosphate + L-glutamate + phosphate + 3 H2O + H(+). It functions in the pathway cofactor biosynthesis; pyridoxal 5'-phosphate biosynthesis. Its function is as follows. Catalyzes the formation of pyridoxal 5'-phosphate from ribose 5-phosphate (RBP), glyceraldehyde 3-phosphate (G3P) and ammonia. The ammonia is provided by PDX2. Can also use ribulose 5-phosphate and dihydroxyacetone phosphate as substrates, resulting from enzyme-catalyzed isomerization of RBP and G3P, respectively. Also plays an indirect role in resistance to singlet oxygen-generating photosensitizers. The chain is Probable pyridoxal 5'-phosphate synthase subunit PDX1.1 (PDX11) from Oryza sativa subsp. japonica (Rice).